The primary structure comprises 261 residues: Mediator of RNA polymerase II transcription subunit 7 (261 aa).

2 disordered regions span residues 1-55 and 224-250; these read MAEA…TPAE and DSASKSGENDTAKRTTGDQDANNANSS. 2 stretches are compositionally biased toward basic and acidic residues: residues 23 to 45 and 230 to 240; these read FTPDNLKRLEEVKKEASKGEDGK and GENDTAKRTTG. A compositionally biased stretch (polar residues) spans 241–250; it reads DQDANNANSS.

The protein belongs to the Mediator complex subunit 7 family. In terms of assembly, component of the Mediator complex.

The protein localises to the nucleus. In terms of biological role, component of the Mediator complex, a coactivator involved in the regulated transcription of nearly all RNA polymerase II-dependent genes. Mediator functions as a bridge to convey information from gene-specific regulatory proteins to the basal RNA polymerase II transcription machinery. Mediator is recruited to promoters by direct interactions with regulatory proteins and serves as a scaffold for the assembly of a functional preinitiation complex with RNA polymerase II and the general transcription factors. The sequence is that of Mediator of RNA polymerase II transcription subunit 7 (med7) from Neosartorya fischeri (strain ATCC 1020 / DSM 3700 / CBS 544.65 / FGSC A1164 / JCM 1740 / NRRL 181 / WB 181) (Aspergillus fischerianus).